The sequence spans 574 residues: DNA polymerase alpha subunit B (574 aa).

It belongs to the DNA polymerase alpha subunit B family. As to quaternary structure, component of the alpha DNA polymerase complex (also known as the alpha DNA polymerase-primase complex) consisting of four subunits: the catalytic subunit pol1, the accessory subunit spb70/pol12, and the primase complex subunits spp1/pri1 and spp2/pri2 respectively. Interacts with orc1. Interacts with orc2; the interaction occurs on the chromatin, is stable thoughout the cell cycle and is independent from spb70 role in the alpha DNA polymerase complex. Post-translationally, phosphorylated in a cell cycle-dependent manner.

The protein localises to the nucleus. It is found in the chromosome. Functionally, accessory subunit of the DNA polymerase alpha complex (also known as the alpha DNA polymerase-primase complex) which plays an essential role in the initiation of DNA synthesis. During the S phase of the cell cycle, the DNA polymerase alpha complex (composed of a catalytic subunit pol1, an accessory subunit spb70/pol12 and two primase subunits, the catalytic subunit spp1/pri1 and the regulatory subunit spp2/pri2) is recruited to DNA at the replicative forks. The primase subunit of the polymerase alpha complex initiates DNA synthesis by oligomerising short RNA primers on both leading and lagging strands. This Schizosaccharomyces pombe (strain 972 / ATCC 24843) (Fission yeast) protein is DNA polymerase alpha subunit B.